A 388-amino-acid chain; its full sequence is Chaperone protein DnaJ (388 aa).

Residues 5-70 enclose the J domain; it reads DYYTTLNISN…KKRNLYDQYG (66 aa). The CR-type zinc finger occupies 135-213; it reads GIKKEIRIPK…CFGQGRIKKS (79 aa). 8 residues coordinate Zn(2+): C148, C151, C165, C168, C187, C190, C201, and C204. CXXCXGXG motif repeat units lie at residues 148-155, 165-172, 187-194, and 201-208; these read CQSCYGYG, CTSCNGHG, CSTCRGTG, and CKICFGQG.

This sequence belongs to the DnaJ family. Homodimer. Requires Zn(2+) as cofactor.

It localises to the cytoplasm. In terms of biological role, participates actively in the response to hyperosmotic and heat shock by preventing the aggregation of stress-denatured proteins and by disaggregating proteins, also in an autonomous, DnaK-independent fashion. Unfolded proteins bind initially to DnaJ; upon interaction with the DnaJ-bound protein, DnaK hydrolyzes its bound ATP, resulting in the formation of a stable complex. GrpE releases ADP from DnaK; ATP binding to DnaK triggers the release of the substrate protein, thus completing the reaction cycle. Several rounds of ATP-dependent interactions between DnaJ, DnaK and GrpE are required for fully efficient folding. Also involved, together with DnaK and GrpE, in the DNA replication of plasmids through activation of initiation proteins. The chain is Chaperone protein DnaJ from Buchnera aphidicola subsp. Cinara cedri (strain Cc).